The sequence spans 345 residues: MVNSFEKSRFLLVKKLLEGEPLTPGEAAQLAQAMLDPSFDNSLKAAALAALRVRGEQPGEVVGFARALRDRAVRVEYGGEVLLDTAGTGGDGLSTLNASTAAALVAASLGVPTAKHGNRSFSSKSGSADVMEMLGYNINHRADRAVRMLSTLGFTFLYAPNYHPAMKAVVPVRRKLATRTIFNLVGPLANPAFNNVQVIGVARRSLMPVIASAASLLGYDAVLVVHGDPGMDEVSVTGETKILEVRRGRIEEYSITPEDLGLPITGLKELRVANAVESAERVRRALSGRGRRSDEAFIAANAAAALYVAGFEKDLKGAAEAAVQAIREGRPAALLEKAVKASLGM.

Residues glycine 87, 90–91 (GD), threonine 95, 97–100 (NAST), 115–123 (KHGNRSFSS), and serine 127 contribute to the 5-phospho-alpha-D-ribose 1-diphosphate site. Glycine 87 serves as a coordination point for anthranilate. Residue serine 99 participates in Mg(2+) binding. Asparagine 118 serves as a coordination point for anthranilate. Arginine 173 contributes to the anthranilate binding site. Aspartate 232 and glutamate 233 together coordinate Mg(2+).

It belongs to the anthranilate phosphoribosyltransferase family. In terms of assembly, homodimer. Mg(2+) serves as cofactor.

It carries out the reaction N-(5-phospho-beta-D-ribosyl)anthranilate + diphosphate = 5-phospho-alpha-D-ribose 1-diphosphate + anthranilate. Its pathway is amino-acid biosynthesis; L-tryptophan biosynthesis; L-tryptophan from chorismate: step 2/5. Its function is as follows. Catalyzes the transfer of the phosphoribosyl group of 5-phosphorylribose-1-pyrophosphate (PRPP) to anthranilate to yield N-(5'-phosphoribosyl)-anthranilate (PRA). This Aeropyrum pernix (strain ATCC 700893 / DSM 11879 / JCM 9820 / NBRC 100138 / K1) protein is Anthranilate phosphoribosyltransferase.